Reading from the N-terminus, the 863-residue chain is Disintegrin and metalloproteinase domain-containing protein 15 (863 aa).

The signal sequence occupies residues 1-17 (MRLALLWALGLLGAGSP). A propeptide spanning residues 18–206 (LPSWPLPNIG…LGQRHIRRRR (189 aa)) is cleaved from the precursor. The interval 22-45 (PLPNIGGTEEQQAESEKAPREPLE) is disordered. The span at 35–44 (ESEKAPREPL) shows a compositional bias: basic and acidic residues. The Cysteine switch motif lies at 177-184 (HTCALSWR). C179 provides a ligand contact to Zn(2+). Topologically, residues 207-696 (DVVTETKTVE…QLKATSSLTT (490 aa)) are extracellular. Positions 213–414 (KTVELVIVAD…GMGSCLFERL (202 aa)) constitute a Peptidase M12B domain. An N-linked (GlcNAc...) asparagine glycan is attached at N237. 4 disulfide bridges follow: C323–C409, C365–C393, C367–C376, and C480–C500. Residue H348 participates in Zn(2+) binding. E349 is an active-site residue. Zn(2+) contacts are provided by H352 and H358. 2 N-linked (GlcNAc...) asparagine glycosylation sites follow: N389 and N392. The region spanning 421-508 (AAFCGNMFVE…QCPPDVSLGD (88 aa)) is the Disintegrin domain. The Cell attachment site motif lies at 484–486 (RGD). N606 and N611 each carry an N-linked (GlcNAc...) asparagine glycan. 3 disulfides stabilise this stretch: C657-C667, C661-C673, and C675-C684. Residues 657–685 (CRSKCHGHGVCDSNRHCYCEEGWAPPDCT) enclose the EGF-like domain. A helical membrane pass occupies residues 697–717 (GLLLSLLVLLVLVMLGASYWY). Residues Y715 and Y735 each carry the phosphotyrosine; by HCK and LCK modification. Topologically, residues 718–863 (RARLHQRLCQ…PPPTVSSLYL (146 aa)) are cytoplasmic. The tract at residues 736–863 (RAAQSGPSER…PPPTVSSLYL (128 aa)) is disordered. The span at 767–778 (PAPPSRPLPPDP) shows a compositional bias: pro residues. Basic and acidic residues predominate over residues 779–789 (VSKRLQAELAD). Pro residues-rich tracts occupy residues 791 to 800 (PNPPTRPLPA) and 813 to 824 (AKPPPPRKPLPA). Short sequence motifs (SH3-binding) lie at residues 815–821 (PPPPRKP) and 850–856 (RPAPPPP).

As to quaternary structure, interacts with ITAGV-ITGB3 (vitronectin receptor). Interacts with SH3GL2 and SNX9; this interaction occurs preferentially with ADAM15 precursor, rather than the processed form, suggesting it occurs in a secretory pathway compartment prior to the medial Golgi. Interacts with ITAG9-ITGB1. Interacts specifically with Src family protein-tyrosine kinases (PTKs). Interacts with SH3PXD2A. Interacts with ITAGV-ITGB1. Interacts with GRB2, HCK, ITSN1, ITSN2, LYN, MAPK1, MAPK3, NCF1, NCK1, nephrocystin, PTK6, SNX33, LCK and SRC. The cofactor is Zn(2+). In terms of processing, the precursor is cleaved by a furin endopeptidase. Post-translationally, phosphorylation increases association with PTKs. Expressed in colon and small intestine. Expressed in airway smooth muscle and glomerular mesangial cells (at protein level). Ubiquitously expressed. Overexpressed in atherosclerotic lesions. Constitutively expressed in cultured endothelium and smooth muscle. Expressed in chondrocytes. Expressed in airway smooth muscle and glomerular mesangial cells.

The protein localises to the endomembrane system. The protein resides in the cell junction. Its subcellular location is the adherens junction. It is found in the cell projection. It localises to the cilium. The protein localises to the flagellum. The protein resides in the cytoplasmic vesicle. Its subcellular location is the secretory vesicle. It is found in the acrosome. With respect to regulation, inhibited by hydroxamate-type metalloproteinase inhibitors such as marimastat. Inhibited by metalloproteinase inhibitor 2 (TIMP-2) and TIMP-3 at nanomolar concentrations. Not significantly inhibited by TIMP-1 at concentrations of up to 100 nM. Not activated by PMA or ionomycin. Functionally, active metalloproteinase with gelatinolytic and collagenolytic activity. Plays a role in the wound healing process. Mediates both heterotypic intraepithelial cell/T-cell interactions and homotypic T-cell aggregation. Inhibits beta-1 integrin-mediated cell adhesion and migration of airway smooth muscle cells. Suppresses cell motility on or towards fibronectin possibly by driving alpha-v/beta-1 integrin (ITAGV-ITGB1) cell surface expression via ERK1/2 inactivation. Cleaves E-cadherin in response to growth factor deprivation. Plays a role in glomerular cell migration. Plays a role in pathological neovascularization. May play a role in cartilage remodeling. May be proteolytically processed, during sperm epididymal maturation and the acrosome reaction. May play a role in sperm-egg binding through its disintegrin domain. The polypeptide is Disintegrin and metalloproteinase domain-containing protein 15 (ADAM15) (Homo sapiens (Human)).